Reading from the N-terminus, the 194-residue chain is Probable GTP-binding protein EngB (194 aa).

The EngB-type G domain maps to D19 to K193. GTP-binding positions include G27–S34, G53–F57, D70–G73, T137–D140, and V172–S174. The Mg(2+) site is built by S34 and T55.

The protein belongs to the TRAFAC class TrmE-Era-EngA-EngB-Septin-like GTPase superfamily. EngB GTPase family. Requires Mg(2+) as cofactor.

Functionally, necessary for normal cell division and for the maintenance of normal septation. The chain is Probable GTP-binding protein EngB from Mycoplasmopsis agalactiae (strain NCTC 10123 / CIP 59.7 / PG2) (Mycoplasma agalactiae).